The sequence spans 469 residues: MSAPRTLYDKIWDDHVVDQQEDGTCLLYIDRHLVHEVTSPQAFEGLRMAGRPVRHPEKTLAVVDHNVPTSPDRINGIQNEESRIQVEALARNAADFGVEYYSERDKRQGIVHIVGPEQGFTLPGMTIVCGDSHTSTHGAFGALAHGIGTSEVEHVLATQTLIQKKAKNMLVRVDGKLPAGVTAKDIVLAIIGEIGTAGGTGYVIEYAGEAIRSLSMEGRMTICNMSIEGGARAGLIAPDETTFEYIKGRPRAPQGETLEQAINYWKTLHSDEGAHFDKIVTLDAGSLPPIVSWGSSPEDVVSVTGVVPNPDDIADETKRASKWRALDYMGLKPGTKITDIAVDRVFIGSCTNGRIEDLRAAAKVVEGKKVAPTVNAMIVPGSGLVKEQAEAEGLHKIFIEAGFDWREPGCSMCLAMNDDRLKPGERCASTSNRNFEGRQGFKGRTHLVSPAMAAAAAIAGHFVDIRAWK.

[4Fe-4S] cluster contacts are provided by Cys-350, Cys-410, and Cys-413.

The protein belongs to the aconitase/IPM isomerase family. LeuC type 1 subfamily. As to quaternary structure, heterodimer of LeuC and LeuD. [4Fe-4S] cluster is required as a cofactor.

The enzyme catalyses (2R,3S)-3-isopropylmalate = (2S)-2-isopropylmalate. It functions in the pathway amino-acid biosynthesis; L-leucine biosynthesis; L-leucine from 3-methyl-2-oxobutanoate: step 2/4. Catalyzes the isomerization between 2-isopropylmalate and 3-isopropylmalate, via the formation of 2-isopropylmaleate. This is 3-isopropylmalate dehydratase large subunit from Brucella abortus (strain S19).